The primary structure comprises 84 residues: Large ribosomal subunit protein bL27 (84 aa).

The tract at residues 1–24 (MAHKKAGGSSRNGRDSKGQRLGCK) is disordered.

Belongs to the bacterial ribosomal protein bL27 family.

This is Large ribosomal subunit protein bL27 from Pelobacter propionicus (strain DSM 2379 / NBRC 103807 / OttBd1).